We begin with the raw amino-acid sequence, 102 residues long: Large ribosomal subunit protein bL21 (102 aa).

Residues 79–91 (RKDSKRKKGHRQP) are compositionally biased toward basic residues. Residues 79–102 (RKDSKRKKGHRQPYTKLTIDKINA) are disordered.

It belongs to the bacterial ribosomal protein bL21 family. Part of the 50S ribosomal subunit. Contacts protein L20.

Functionally, this protein binds to 23S rRNA in the presence of protein L20. The protein is Large ribosomal subunit protein bL21 of Staphylococcus epidermidis (strain ATCC 35984 / DSM 28319 / BCRC 17069 / CCUG 31568 / BM 3577 / RP62A).